A 77-amino-acid polypeptide reads, in one-letter code: MKLIIFTGLVLFAIVSLIEAQAENEKACLPQYQVCTDAPGNCCSNLVCDCYGRYKSGARIGRNCFCLQKGVIYKREN.

A signal peptide spans 1–20; that stretch reads MKLIIFTGLVLFAIVSLIEA. Residues 21–26 constitute a propeptide that is removed on maturation; that stretch reads QAENEK.

This sequence belongs to the neurotoxin 19 (CSTX) family. 08 (U8-Lctx) subfamily. Post-translationally, contains 4 disulfide bonds. As to expression, expressed by the venom gland.

It is found in the secreted. The polypeptide is U8-lycotoxin-Ls1b (Lycosa singoriensis (Wolf spider)).